Here is a 257-residue protein sequence, read N- to C-terminus: UPF0246 protein BF4021 (257 aa).

This sequence belongs to the UPF0246 family.

This chain is UPF0246 protein BF4021, found in Bacteroides fragilis (strain YCH46).